Consider the following 857-residue polypeptide: Elongation factor 2 (857 aa).

Residues 17–362 (ANIRNMSVIA…MITIHLPSPV (346 aa)) form the tr-type G domain. 26–33 (AHVDHGKS) lines the GTP pocket. Phosphothreonine occurs at positions 54, 57, and 59. Position 152 is an N6-succinyllysine (K152). GTP-binding positions include 158–161 (NKMD) and 216–218 (SGL). K235 bears the N6-acetyllysine mark. Residue K239 is modified to N6-acetyllysine; alternate. Residue K239 forms a Glycyl lysine isopeptide (Lys-Gly) (interchain with G-Cter in SUMO1); alternate linkage. A Phosphotyrosine modification is found at Y265. K272 carries the post-translational modification N6-acetyllysine; alternate. K272 bears the N6-succinyllysine; alternate mark. K275 bears the N6-acetyllysine mark. K322 participates in a covalent cross-link: Glycyl lysine isopeptide (Lys-Gly) (interchain with G-Cter in SUMO). S325 is modified (phosphoserine). Position 373 is a phosphotyrosine (Y373). Phosphothreonine is present on T435. Residues K439 and K445 each carry the N6-acetyllysine modification. Position 502 is a phosphoserine (S502). Residue K525 is modified to N6,N6,N6-trimethyllysine. K529 participates in a covalent cross-link: Glycyl lysine isopeptide (Lys-Gly) (interchain with G-Cter in SUMO). At K572 the chain carries N6-succinyllysine. S595 is modified (phosphoserine). K619 is subject to N6-acetyllysine. H715 is modified (diphthamide).

This sequence belongs to the GTP-binding elongation factor family. EF-G/EF-2 subfamily. In terms of assembly, binds to 80S ribosomes. Actively translating ribosomes show mutually exclusive binding of eIF5a (EIF5A or EIF5A2) and EEF2/eEF2. Interacts with SERBP1; interaction sequesters EEF2/eEF2 at the A-site of the ribosome, thereby blocking the interaction sites of the mRNA-tRNA complex, promoting ribosome stabilization and hibernation. Interacts with HABP4; interaction takes place at the A-site of hibernating ribosomes and promotes ribosome stabilization. Component of the mRNA surveillance SURF complex, at least composed of ERF1, ERF3 (ERF3A or ERF3B), EEF2, UPF1/RENT1, SMG1, SMG8 and SMG9. Interacts with RBPMS2. Post-translationally, phosphorylation by EF-2 kinase completely inactivates EF-2; it requires prior phosphorylation by CDK2 at Ser-595 during mitotic prometaphase. Phosphorylation by CSK promotes SUMOylation, proteolytic cleavage, and nuclear translocation if the C-terminal fragment. In terms of processing, diphthamide is 2-[3-carboxyamido-3-(trimethyl-ammonio)propyl]histidine. ISGylated. Post-translationally, proteolytically processed at two sites following phosphorylation by CSK. In terms of processing, SUMOylated following phosphorylation by CSK, promotes proteolytic cleavage.

It localises to the cytoplasm. The protein localises to the nucleus. It catalyses the reaction GTP + H2O = GDP + phosphate + H(+). In terms of biological role, catalyzes the GTP-dependent ribosomal translocation step during translation elongation. During this step, the ribosome changes from the pre-translocational (PRE) to the post-translocational (POST) state as the newly formed A-site-bound peptidyl-tRNA and P-site-bound deacylated tRNA move to the P and E sites, respectively. Catalyzes the coordinated movement of the two tRNA molecules, the mRNA and conformational changes in the ribosome. In Oryctolagus cuniculus (Rabbit), this protein is Elongation factor 2 (EEF2).